A 176-amino-acid polypeptide reads, in one-letter code: Large ribosomal subunit protein eL20 (176 aa).

This sequence belongs to the eukaryotic ribosomal protein eL20 family. As to quaternary structure, component of the large ribosomal subunit.

It is found in the cytoplasm. In terms of biological role, component of the large ribosomal subunit. The ribosome is a large ribonucleoprotein complex responsible for the synthesis of proteins in the cell. The sequence is that of Large ribosomal subunit protein eL20 (rpl18a) from Ictalurus punctatus (Channel catfish).